The primary structure comprises 287 residues: 4-hydroxybenzoate octaprenyltransferase (287 aa).

The next 8 helical transmembrane spans lie at 19-39 (PIGS…AADG), 43-63 (LHVL…GCVI), 94-116 (LALA…PLVI), 135-155 (FFAI…PMGF), 160-180 (GEVP…AVAY), 207-227 (FDVA…GWVG), 234-254 (ALYF…YTLI), and 269-286 (NNWL…DYLI).

Belongs to the UbiA prenyltransferase family. The cofactor is Mg(2+).

Its subcellular location is the cell inner membrane. The enzyme catalyses all-trans-octaprenyl diphosphate + 4-hydroxybenzoate = 4-hydroxy-3-(all-trans-octaprenyl)benzoate + diphosphate. It functions in the pathway cofactor biosynthesis; ubiquinone biosynthesis. Its function is as follows. Catalyzes the prenylation of para-hydroxybenzoate (PHB) with an all-trans polyprenyl group. Mediates the second step in the final reaction sequence of ubiquinone-8 (UQ-8) biosynthesis, which is the condensation of the polyisoprenoid side chain with PHB, generating the first membrane-bound Q intermediate 3-octaprenyl-4-hydroxybenzoate. This is 4-hydroxybenzoate octaprenyltransferase from Azoarcus sp. (strain BH72).